We begin with the raw amino-acid sequence, 38 residues long: Photosystem II reaction center protein L (38 aa).

A helical transmembrane segment spans residues 17–37 (SLYWGLLLIFVLAVLFSNYFF).

This sequence belongs to the PsbL family. In terms of assembly, PSII is composed of 1 copy each of membrane proteins PsbA, PsbB, PsbC, PsbD, PsbE, PsbF, PsbH, PsbI, PsbJ, PsbK, PsbL, PsbM, PsbT, PsbX, PsbY, PsbZ, Psb30/Ycf12, at least 3 peripheral proteins of the oxygen-evolving complex and a large number of cofactors. It forms dimeric complexes.

The protein resides in the plastid. It is found in the chloroplast thylakoid membrane. Its function is as follows. One of the components of the core complex of photosystem II (PSII). PSII is a light-driven water:plastoquinone oxidoreductase that uses light energy to abstract electrons from H(2)O, generating O(2) and a proton gradient subsequently used for ATP formation. It consists of a core antenna complex that captures photons, and an electron transfer chain that converts photonic excitation into a charge separation. This subunit is found at the monomer-monomer interface and is required for correct PSII assembly and/or dimerization. The polypeptide is Photosystem II reaction center protein L (Psilotum nudum (Whisk fern)).